A 413-amino-acid chain; its full sequence is Phosphopentomutase (413 aa).

Positions 11, 306, 311, 347, 348, and 359 each coordinate Mn(2+).

The protein belongs to the phosphopentomutase family. Mn(2+) serves as cofactor.

The protein localises to the cytoplasm. The enzyme catalyses 2-deoxy-alpha-D-ribose 1-phosphate = 2-deoxy-D-ribose 5-phosphate. It carries out the reaction alpha-D-ribose 1-phosphate = D-ribose 5-phosphate. The protein operates within carbohydrate degradation; 2-deoxy-D-ribose 1-phosphate degradation; D-glyceraldehyde 3-phosphate and acetaldehyde from 2-deoxy-alpha-D-ribose 1-phosphate: step 1/2. Functionally, isomerase that catalyzes the conversion of deoxy-ribose 1-phosphate (dRib-1-P) and ribose 1-phosphate (Rib-1-P) to deoxy-ribose 5-phosphate (dRib-5-P) and ribose 5-phosphate (Rib-5-P), respectively. The polypeptide is Phosphopentomutase (Helicobacter pylori (strain J99 / ATCC 700824) (Campylobacter pylori J99)).